We begin with the raw amino-acid sequence, 225 residues long: uncharacterized protein (225 aa).

E69, E71, and D100 together coordinate a divalent metal cation.

Belongs to the FAH family.

This is an uncharacterized protein from Pyrococcus abyssi (strain GE5 / Orsay).